We begin with the raw amino-acid sequence, 325 residues long: Brain mitochondrial carrier protein 1 (325 aa).

6 helical membrane passes run 38 to 54, 112 to 128, 141 to 161, 199 to 215, 240 to 256, and 298 to 315; these read GLNWKPFVYGGLASIVA, LRQASYGTIKIGIYQSL, LLINMICGVVSGVISSTIANP, GVVPTAQRAAIVVGVEL, VSSFTCGLAGALASNPV, and GFWPNWLRLGPWNIIFFI. 3 Solcar repeats span residues 42–131, 139–224, and 233–323; these read KPFV…LKRL, ETLL…TKKH, and DTIL…LKRL.

It belongs to the mitochondrial carrier (TC 2.A.29) family. Homotetramer. In terms of tissue distribution, mainly expressed in brain. Some expression in testis and pituitary.

It is found in the mitochondrion inner membrane. The enzyme catalyses sulfite(in) + sulfate(out) = sulfite(out) + sulfate(in). It carries out the reaction thiosulfate(in) + sulfate(out) = thiosulfate(out) + sulfate(in). It catalyses the reaction sulfate(out) + phosphate(in) = sulfate(in) + phosphate(out). The catalysed reaction is oxalate(in) + sulfate(out) = oxalate(out) + sulfate(in). The enzyme catalyses malonate(in) + sulfate(out) = malonate(out) + sulfate(in). It carries out the reaction maleate(in) + sulfate(out) = maleate(out) + sulfate(in). It catalyses the reaction (S)-malate(in) + sulfate(out) = (S)-malate(out) + sulfate(in). The catalysed reaction is (3S)-citramalate(in) + sulfate(out) = (3S)-citramalate(out) + sulfate(in). The enzyme catalyses (3R)-citramalate(in) + sulfate(out) = (3R)-citramalate(out) + sulfate(in). It carries out the reaction sulfate(out) + succinate(in) = sulfate(in) + succinate(out). It catalyses the reaction (S,S)-tartrate(in) + sulfate(out) = (S,S)-tartrate(out) + sulfate(in). The catalysed reaction is (2R,3R)-tartrate(in) + sulfate(out) = (2R,3R)-tartrate(out) + sulfate(in). The enzyme catalyses D-aspartate(in) + sulfate(out) = D-aspartate(out) + sulfate(in). It carries out the reaction L-aspartate(in) + sulfate(out) = L-aspartate(out) + sulfate(in). It catalyses the reaction sulfate(in) = sulfate(out). The catalysed reaction is phosphate(in) = phosphate(out). The enzyme catalyses (S)-malate(out) = (S)-malate(in). It carries out the reaction citrate(in) = citrate(out). It catalyses the reaction L-aspartate(out) = L-aspartate(in). The catalysed reaction is L-glutamate(out) = L-glutamate(in). The enzyme catalyses H(+)(in) = H(+)(out). It carries out the reaction chloride(in) = chloride(out). Its activity is regulated as follows. Increased activity at pH lower than 8.0. sulfate/sulfate exchange activity is inhibited strongly by pyridoxal 5'-phosphate, bathophenanthroline and the organic mercurials mersalyl, p-chloromercuribenzoate and HgCl2. Proton conductance is activated by cardiolipin and long-chain free fatty acids and inhibited by purine nucleotides ATP and ADP. Chloride ion transporter activity is inhibited by long-chain free fatty acids. Functionally, transports inorganic anions (sulfate, sulfite, thiosulfate and phosphate) and, to a lesser extent, a variety of dicarboxylates (e.g. malonate, malate and citramalate) and, even more so, aspartate and glutamate and tricarboxylates. May catalyze the export of sulfite and thiosulfate (the hydrogen sulfide degradation products) from the mitochondria, thereby modulating the level of the hydrogen sulfide. Also can mediate a very low unidirectional transport of anions including sulfate, phosphate, (S)-malate, citrate, L-aspartate and L-glutamate. Maintains oxidative balance (through uncoupling activities) and ATP production (by modifying mitochondrial membrane potential). Is able to transport protons across lipid membranes. Also exhibits transmembrane chloride transport activity to a lesser extent. May modify mitochondrial respiratory efficiency and mitochondrial oxidant production. The protein is Brain mitochondrial carrier protein 1 of Homo sapiens (Human).